Reading from the N-terminus, the 370-residue chain is tRNA-specific 2-thiouridylase MnmA (370 aa).

ATP-binding positions include 11 to 18 (GMSGGVDS) and Met-37. Residues 97–99 (NPD) form an interaction with target base in tRNA region. The active-site Nucleophile is the Cys-102. A disulfide bridge links Cys-102 with Cys-199. ATP is bound at residue Gly-126. The tract at residues 149–151 (KDQ) is interaction with tRNA. Cys-199 serves as the catalytic Cysteine persulfide intermediate. The tract at residues 307–308 (RY) is interaction with tRNA.

The protein belongs to the MnmA/TRMU family.

It localises to the cytoplasm. The enzyme catalyses S-sulfanyl-L-cysteinyl-[protein] + uridine(34) in tRNA + AH2 + ATP = 2-thiouridine(34) in tRNA + L-cysteinyl-[protein] + A + AMP + diphosphate + H(+). Functionally, catalyzes the 2-thiolation of uridine at the wobble position (U34) of tRNA, leading to the formation of s(2)U34. This Staphylococcus saprophyticus subsp. saprophyticus (strain ATCC 15305 / DSM 20229 / NCIMB 8711 / NCTC 7292 / S-41) protein is tRNA-specific 2-thiouridylase MnmA.